We begin with the raw amino-acid sequence, 760 residues long: uncharacterized protein (760 aa).

An N-terminal signal peptide occupies residues methionine 1 to alanine 20. The N-palmitoyl cysteine moiety is linked to residue cysteine 21. Residue cysteine 21 is the site of S-diacylglycerol cysteine attachment. Disordered regions lie at residues glutamate 221 to lysine 243, alanine 272 to aspartate 315, and isoleucine 705 to alanine 741. Positions alanine 272 to glutamate 284 are enriched in basic and acidic residues. Positions lysine 300–threonine 312 are enriched in polar residues. Residues isoleucine 705 to aspartate 721 are compositionally biased toward basic and acidic residues.

Belongs to the MG185/MG260 family.

It localises to the cell membrane. This is an uncharacterized protein from Mycoplasma pneumoniae (strain ATCC 29342 / M129 / Subtype 1) (Mycoplasmoides pneumoniae).